Consider the following 1262-residue polypeptide: Zinc finger protein 592 (1262 aa).

Residues 23–45 (SLDAKEAIQAPSEENESPLKSSG) are disordered. Residues Ser-78, Ser-142, Ser-145, and Ser-146 each carry the phosphoserine modification. 3 disordered regions span residues 122 to 174 (SFTS…PPPG), 200 to 278 (KKEP…AHSK), and 294 to 494 (VANV…ASTP). Residues Lys-200 and Lys-204 each participate in a glycyl lysine isopeptide (Lys-Gly) (interchain with G-Cter in SUMO2) cross-link. Basic and acidic residues-rich tracts occupy residues 213 to 232 (QQEH…DLDS) and 298 to 308 (TKEDQPGHTKD). The span at 343–367 (PSDSPRSICSDSSSKGSPSVAASSP) shows a compositional bias: low complexity. Residues 454–463 (IKTSDSSSPC) are compositionally biased toward polar residues. A compositionally biased stretch (low complexity) spans 484 to 494 (QQSTAPQASTP). At Ser-529 the chain carries Phosphoserine. Residue Lys-546 forms a Glycyl lysine isopeptide (Lys-Gly) (interchain with G-Cter in SUMO2) linkage. At Ser-573 the chain carries Phosphoserine. The C2H2-type 1; atypical zinc-finger motif lies at 587–612 (YCCLECGDAFALEKSLSQHYSRRSVH). Residues 615–639 (VLCTLCSKTLLFFNKCSLLRHARDH) form a C2H2-type 2; atypical zinc finger. A Phosphoserine modification is found at Ser-691. The segment at 711–731 (TKCPECHKQMRDYMVLATHFQ) adopts a C2H2-type 3; degenerate zinc-finger fold. A C2H2-type 4 zinc finger spans residues 740-764 (LTCQVCQMLLPNQCSFCAHQRIHAH). The C2H2-type 5; atypical zinc finger occupies 768–790 (YCCPECGVLCRSAYFQTHVKENC). 3 consecutive C2H2-type zinc fingers follow at residues 799–822 (YRCI…QERH), 827–850 (HKCA…TTQH), and 892–915 (FKCP…KNTH). A compositionally biased stretch (low complexity) spans 924–935 (LSSLQSSTDTSS). The disordered stretch occupies residues 924–979 (LSSLQSSTDTSSNRPGSRAPAEPPATNVAARGSSLTAGRWGRPEAHRRAEARPRMR). Basic and acidic residues predominate over residues 964-976 (GRPEAHRRAEARP). 2 C2H2-type zinc fingers span residues 983–1006 (WTCQ…KKSH) and 1013–1036 (YPCR…RNNH). The segment at 1043 to 1069 (YTCGYCTEDSPSFPRPSLLESHISLMH) adopts a C2H2-type 11; atypical zinc-finger fold. A Phosphoserine modification is found at Ser-1089. The C2H2-type 12; atypical zinc finger occupies 1124 to 1146 (FQCAKCTFATDSELEFQSHIPQH). The C2H2-type 13 zinc finger occupies 1153-1176 (AQCLLCGLCYTSTSSLNRHLFIVH). 2 positions are modified to phosphoserine: Ser-1198 and Ser-1202. The tract at residues 1222-1262 (PLVTDLGGQQGLALDEDSAQDPQNQPQASQDQNSHALSPQV) is disordered. A compositionally biased stretch (polar residues) spans 1241–1262 (QDPQNQPQASQDQNSHALSPQV).

It belongs to the krueppel C2H2-type zinc-finger protein family. As to quaternary structure, interacts with ZMYND8. Expressed in the brain.

The protein resides in the nucleus. May be involved in transcriptional regulation. This chain is Zinc finger protein 592 (Znf592), found in Mus musculus (Mouse).